The following is a 640-amino-acid chain: Protein argonaute (640 aa).

The N-terminal domain stretch occupies residues 1–100 (MYLNLYEIKI…YIKKKFIDNN (100 aa)). Positions 101 to 153 (FYYKRGNNYISINDKFPLDSNTNVNAHLTYKIKLYKINERYYISVLPKFTFLS) are linker L1. A PAZ domain region spans residues 154 to 209 (DKPALESPIKSTYLFNIKSGKTFPYISGLNGVLKIDLGENGIKEVLFPENYYFNFT). Positions 210 to 291 (SKEAEKFGFS…KYSFYKNDQK (82 aa)) are linker L2. The interval 292–423 (IKIAFFFSSK…YVYKMGNFIP (132 aa)) is mid domain. Residues 424–640 (ECQPYVIRNL…EWKLYIPYMK (217 aa)) form a PIWI domain region. Residues aspartate 445, glutamate 481, aspartate 515, and asparagine 623 contribute to the active site. Aspartate 445 serves as a coordination point for Mn(2+). Mn(2+) contacts are provided by aspartate 515 and asparagine 623.

The protein belongs to the argonaute family. Long pAgo subfamily. Mn(2+) is required as a cofactor.

Its function is as follows. A highly versatile argonaute that uses 5'-phospho- and 5'-OH- guide RNA (gRNA) or DNA (gDNA) to cleave target RNA or ssDNA (tDNA) in all possible combinations; has no detectable activity in the absence of guide. Uses short guide sequences (18-21 nucleotides (nt) on average) to bind complementary target nucleic acids resulting in target cleavage in a site-specific manner. Using 5'-phospho-gRNA or 5'-OH-gRNA the cleavage site is 10 nt downstream of the target residue base-paired with the 5'-end of the gRNA, using 5'-phospho-gDNA the cleavage site is 11 nucleotides (nt) downstream, while with 5'-OH-gDNA the cleavage site is 9 nt downstream. This Marinitoga hydrogenitolerans (strain DSM 16785 / JCM 12826 / AT1271) protein is Protein argonaute.